We begin with the raw amino-acid sequence, 669 residues long: DNA mismatch repair protein MutL (669 aa).

The segment at 357–379 (EQRQNTENNQEKTFSSEESNSKS) is disordered. Positions 361-379 (NTENNQEKTFSSEESNSKS) are enriched in polar residues.

Belongs to the DNA mismatch repair MutL/HexB family.

Its function is as follows. This protein is involved in the repair of mismatches in DNA. It is required for dam-dependent methyl-directed DNA mismatch repair. May act as a 'molecular matchmaker', a protein that promotes the formation of a stable complex between two or more DNA-binding proteins in an ATP-dependent manner without itself being part of a final effector complex. The polypeptide is DNA mismatch repair protein MutL (Staphylococcus aureus (strain Mu3 / ATCC 700698)).